Reading from the N-terminus, the 124-residue chain is Holo-[acyl-carrier-protein] synthase (124 aa).

Mg(2+) contacts are provided by D8 and E56.

Belongs to the P-Pant transferase superfamily. AcpS family. It depends on Mg(2+) as a cofactor.

It is found in the cytoplasm. It carries out the reaction apo-[ACP] + CoA = holo-[ACP] + adenosine 3',5'-bisphosphate + H(+). Functionally, transfers the 4'-phosphopantetheine moiety from coenzyme A to a Ser of acyl-carrier-protein. The polypeptide is Holo-[acyl-carrier-protein] synthase (Nitratidesulfovibrio vulgaris (strain ATCC 29579 / DSM 644 / CCUG 34227 / NCIMB 8303 / VKM B-1760 / Hildenborough) (Desulfovibrio vulgaris)).